Consider the following 489-residue polypeptide: Cytochrome P450 2C70 (489 aa).

Positions 1–27 (MALFIFLGIWLSCFLFLFLWNQHRGRG) are cleaved as a signal peptide. Residue Cys-434 coordinates heme.

It belongs to the cytochrome P450 family. The cofactor is heme. As to expression, expressed in liver.

It is found in the endoplasmic reticulum membrane. The protein resides in the microsome membrane. The catalysed reaction is chenodeoxycholate + reduced [NADPH--hemoprotein reductase] + O2 = alpha-muricholate + oxidized [NADPH--hemoprotein reductase] + H2O + H(+). The enzyme catalyses ursodeoxycholate + reduced [NADPH--hemoprotein reductase] + O2 = beta-muricholate + oxidized [NADPH--hemoprotein reductase] + H2O + H(+). A cytochrome P450 monooxygenase involved in muricholic acid (MCA) synthesis. Hydroxylates at the 6-beta position two major bile acids, chenodeoxycholic acid (CDCA) and ursodeoxycholic acid (UDCA) to form alpha-MCA and beta-MCA, respectively. May regulate NR1H4/farnesoid X receptor signaling, as taurine-conjugated MCAs are antagonists of NR1H4. Mechanistically, uses molecular oxygen inserting one oxygen atom into a substrate, and reducing the second into a water molecule, with two electrons provided by NADPH via cytochrome P450 reductase (CPR; NADPH-ferrihemoprotein reductase). This chain is Cytochrome P450 2C70, found in Mus musculus (Mouse).